The following is a 239-amino-acid chain: MLSLGVNIDHIATLRQARRTVEPDPVAAAVIAELAGADGITVHLREDRRHIQDRDVRLLRQTVRTHLNLEMAATEEMVAIALEVKPDYVTLVPERREEITTEGGLDVAGQVSRLRDVVGQLQGSGIPVSLFIDPDPTQIAAAAQVGARWVELHTGRYAEASSAAQRQVELDHLEKASQQALQLGLRVNAGHGLTYWNVGPVARIPGMEELNIGHSIISRAVLVGLDRAVREMRQAMGLS.

3-amino-2-oxopropyl phosphate is bound at residue asparagine 7. A 1-deoxy-D-xylulose 5-phosphate-binding site is contributed by 9 to 10 (DH). Arginine 18 lines the 3-amino-2-oxopropyl phosphate pocket. Histidine 43 serves as the catalytic Proton acceptor. 1-deoxy-D-xylulose 5-phosphate is bound by residues arginine 45 and histidine 50. Glutamate 70 acts as the Proton acceptor in catalysis. A 1-deoxy-D-xylulose 5-phosphate-binding site is contributed by threonine 100. Histidine 191 (proton donor) is an active-site residue. 3-amino-2-oxopropyl phosphate is bound by residues glycine 192 and 213-214 (GH).

This sequence belongs to the PNP synthase family. Homooctamer; tetramer of dimers.

The protein localises to the cytoplasm. It catalyses the reaction 3-amino-2-oxopropyl phosphate + 1-deoxy-D-xylulose 5-phosphate = pyridoxine 5'-phosphate + phosphate + 2 H2O + H(+). It functions in the pathway cofactor biosynthesis; pyridoxine 5'-phosphate biosynthesis; pyridoxine 5'-phosphate from D-erythrose 4-phosphate: step 5/5. Its function is as follows. Catalyzes the complicated ring closure reaction between the two acyclic compounds 1-deoxy-D-xylulose-5-phosphate (DXP) and 3-amino-2-oxopropyl phosphate (1-amino-acetone-3-phosphate or AAP) to form pyridoxine 5'-phosphate (PNP) and inorganic phosphate. In Synechococcus sp. (strain JA-2-3B'a(2-13)) (Cyanobacteria bacterium Yellowstone B-Prime), this protein is Pyridoxine 5'-phosphate synthase.